Here is a 100-residue protein sequence, read N- to C-terminus: NADH-quinone oxidoreductase subunit K (100 aa).

A run of 3 helical transmembrane segments spans residues 4 to 24, 29 to 49, and 60 to 80; these read LQHG…GLII, LFML…FVVV, and VMFI…LALL.

The protein belongs to the complex I subunit 4L family. As to quaternary structure, NDH-1 is composed of 13 different subunits. Subunits NuoA, H, J, K, L, M, N constitute the membrane sector of the complex.

Its subcellular location is the cell inner membrane. It carries out the reaction a quinone + NADH + 5 H(+)(in) = a quinol + NAD(+) + 4 H(+)(out). Functionally, NDH-1 shuttles electrons from NADH, via FMN and iron-sulfur (Fe-S) centers, to quinones in the respiratory chain. The immediate electron acceptor for the enzyme in this species is believed to be ubiquinone. Couples the redox reaction to proton translocation (for every two electrons transferred, four hydrogen ions are translocated across the cytoplasmic membrane), and thus conserves the redox energy in a proton gradient. This Photorhabdus laumondii subsp. laumondii (strain DSM 15139 / CIP 105565 / TT01) (Photorhabdus luminescens subsp. laumondii) protein is NADH-quinone oxidoreductase subunit K.